Consider the following 160-residue polypeptide: Cytochrome b6-f complex subunit 4 (160 aa).

3 helical membrane passes run 36 to 56 (LLYM…GLSV), 95 to 115 (LLGV…PFIE), and 131 to 151 (ILFL…TFPI).

The protein belongs to the cytochrome b family. PetD subfamily. As to quaternary structure, the 4 large subunits of the cytochrome b6-f complex are cytochrome b6, subunit IV (17 kDa polypeptide, petD), cytochrome f and the Rieske protein, while the 4 small subunits are petG, petL, petM and petN. The complex functions as a dimer. In terms of processing, the N-terminus is blocked.

Its subcellular location is the plastid. The protein resides in the chloroplast thylakoid membrane. In terms of biological role, component of the cytochrome b6-f complex, which mediates electron transfer between photosystem II (PSII) and photosystem I (PSI), cyclic electron flow around PSI, and state transitions. In Chlamydomonas reinhardtii (Chlamydomonas smithii), this protein is Cytochrome b6-f complex subunit 4.